The sequence spans 210 residues: Na(+)-translocating NADH-quinone reductase subunit D (210 aa).

6 helical membrane-spanning segments follow: residues 14 to 34 (PIVN…ALAV), 42 to 62 (LVMA…ISMI), 72 to 92 (IIVQ…LLQA), 103 to 123 (VFVG…AYAM), 131 to 151 (FMDG…VGFV), and 178 to 198 (NGLL…IWII).

It belongs to the NqrDE/RnfAE family. As to quaternary structure, composed of six subunits; NqrA, NqrB, NqrC, NqrD, NqrE and NqrF.

It is found in the cell inner membrane. The enzyme catalyses a ubiquinone + n Na(+)(in) + NADH + H(+) = a ubiquinol + n Na(+)(out) + NAD(+). Functionally, NQR complex catalyzes the reduction of ubiquinone-1 to ubiquinol by two successive reactions, coupled with the transport of Na(+) ions from the cytoplasm to the periplasm. NqrA to NqrE are probably involved in the second step, the conversion of ubisemiquinone to ubiquinol. This Shewanella sp. (strain ANA-3) protein is Na(+)-translocating NADH-quinone reductase subunit D.